A 94-amino-acid polypeptide reads, in one-letter code: Aspartyl/glutamyl-tRNA(Asn/Gln) amidotransferase subunit C (94 aa).

Belongs to the GatC family. As to quaternary structure, heterotrimer of A, B and C subunits.

It catalyses the reaction L-glutamyl-tRNA(Gln) + L-glutamine + ATP + H2O = L-glutaminyl-tRNA(Gln) + L-glutamate + ADP + phosphate + H(+). The enzyme catalyses L-aspartyl-tRNA(Asn) + L-glutamine + ATP + H2O = L-asparaginyl-tRNA(Asn) + L-glutamate + ADP + phosphate + 2 H(+). Its function is as follows. Allows the formation of correctly charged Asn-tRNA(Asn) or Gln-tRNA(Gln) through the transamidation of misacylated Asp-tRNA(Asn) or Glu-tRNA(Gln) in organisms which lack either or both of asparaginyl-tRNA or glutaminyl-tRNA synthetases. The reaction takes place in the presence of glutamine and ATP through an activated phospho-Asp-tRNA(Asn) or phospho-Glu-tRNA(Gln). The polypeptide is Aspartyl/glutamyl-tRNA(Asn/Gln) amidotransferase subunit C (Desulfotalea psychrophila (strain LSv54 / DSM 12343)).